The primary structure comprises 33 residues: Cytochrome b6-f complex subunit 8 (33 aa).

The helical transmembrane segment at 2–22 (LFTLGWASLAAMFSFSIAMVV) threads the bilayer.

Belongs to the PetN family. In terms of assembly, the 4 large subunits of the cytochrome b6-f complex are cytochrome b6, subunit IV (17 kDa polypeptide, PetD), cytochrome f and the Rieske protein, while the 4 small subunits are PetG, PetL, PetM and PetN. The complex functions as a dimer.

It is found in the cellular thylakoid membrane. Functionally, component of the cytochrome b6-f complex, which mediates electron transfer between photosystem II (PSII) and photosystem I (PSI), cyclic electron flow around PSI, and state transitions. In Synechococcus sp. (strain CC9605), this protein is Cytochrome b6-f complex subunit 8.